The sequence spans 87 residues: Small ribosomal subunit protein bS20 (87 aa).

It belongs to the bacterial ribosomal protein bS20 family.

Functionally, binds directly to 16S ribosomal RNA. This is Small ribosomal subunit protein bS20 from Parvibaculum lavamentivorans (strain DS-1 / DSM 13023 / NCIMB 13966).